Here is a 107-residue protein sequence, read N- to C-terminus: Class I hydrophobin hgfI (107 aa).

The signal sequence occupies residues 1–24; it reads MFSKLAIFATAAFAVLAAATPVRR. 4 disulfides stabilise this stretch: C27/C88, C34/C82, C35/C68, and C89/C102.

It belongs to the fungal hydrophobin family. Self-assembles to form functional amyloid fibrils called rodlets with a length range 100-150 nm. Self-assembly into fibrillar rodlets occurs spontaneously at hydrophobic:hydrophilic interfaces and the rodlets further associate laterally to form amphipathic monolayers. In terms of tissue distribution, only weekly expressed in hyphae cultured in liquid medium.

It is found in the secreted. The protein localises to the cell wall. Functionally, aerial growth, conidiation, and dispersal of filamentous fungi in the environment rely upon a capability of their secreting small amphipathic proteins called hydrophobins (HPBs) with low sequence identity. Class I can self-assemble into an outermost layer of rodlet bundles on aerial cell surfaces, conferring cellular hydrophobicity that supports fungal growth, development and dispersal; whereas Class II form highly ordered films at water-air interfaces through intermolecular interactions but contribute nothing to the rodlet structure. HgfI is a class I hydrophobin that is involved in cell surface hydrophobicity and lowers the surface tension of water and change the nature of the surfaces to which it adsorbs. This chain is Class I hydrophobin hgfI, found in Grifola frondosa (Maitake).